The primary structure comprises 288 residues: Protease HtpX (288 aa).

2 consecutive transmembrane segments (helical) span residues 5–25 and 34–54; these read IALFLATNLAVLILASIVMSL and SGLLVMAGIFGFGGSFISLLL. Zn(2+) is bound at residue His140. The active site involves Glu141. Residue His144 participates in Zn(2+) binding. The next 2 helical transmembrane spans lie at 155–175 and 190–210; these read LLQGVLNTFVIVLARVVGGII and FAYFIIVFVLEMVFGLFATMI. Glu219 is a Zn(2+) binding site.

This sequence belongs to the peptidase M48B family. Zn(2+) is required as a cofactor.

The protein resides in the cell inner membrane. In Stenotrophomonas maltophilia (strain R551-3), this protein is Protease HtpX.